The chain runs to 191 residues: A-type ATP synthase subunit E 1 (191 aa).

This sequence belongs to the V-ATPase E subunit family. As to quaternary structure, has multiple subunits with at least A(3), B(3), C, D, E, F, H, I and proteolipid K(x).

It is found in the cell membrane. Component of the A-type ATP synthase that produces ATP from ADP in the presence of a proton gradient across the membrane. In Methanospirillum hungatei JF-1 (strain ATCC 27890 / DSM 864 / NBRC 100397 / JF-1), this protein is A-type ATP synthase subunit E 1.